We begin with the raw amino-acid sequence, 140 residues long: Blasticidin-S deaminase (140 aa).

Residues 8-140 form the CMP/dCMP-type deaminase domain; the sequence is QQDLELVEVA…ELIPLKYTRN (133 aa). A Zn(2+)-binding site is contributed by Cys-59. Glu-61 serves as the catalytic Proton donor. Zn(2+) is bound by residues Cys-100 and Cys-103.

Belongs to the cytidine and deoxycytidylate deaminase family. Zn(2+) is required as a cofactor.

The catalysed reaction is blasticidin S + H2O + H(+) = deaminohydroxyblasticidin S + NH4(+). Its function is as follows. Catalyzes the deamination of the cytosine moiety of the antibiotics blasticidin S, cytomycin and acetylblasticidin S. This Bacillus cereus protein is Blasticidin-S deaminase (bsr).